A 496-amino-acid chain; its full sequence is Aspartyl/glutamyl-tRNA(Asn/Gln) amidotransferase subunit B (496 aa).

The protein belongs to the GatB/GatE family. GatB subfamily. Heterotrimer of A, B and C subunits.

The enzyme catalyses L-glutamyl-tRNA(Gln) + L-glutamine + ATP + H2O = L-glutaminyl-tRNA(Gln) + L-glutamate + ADP + phosphate + H(+). The catalysed reaction is L-aspartyl-tRNA(Asn) + L-glutamine + ATP + H2O = L-asparaginyl-tRNA(Asn) + L-glutamate + ADP + phosphate + 2 H(+). In terms of biological role, allows the formation of correctly charged Asn-tRNA(Asn) or Gln-tRNA(Gln) through the transamidation of misacylated Asp-tRNA(Asn) or Glu-tRNA(Gln) in organisms which lack either or both of asparaginyl-tRNA or glutaminyl-tRNA synthetases. The reaction takes place in the presence of glutamine and ATP through an activated phospho-Asp-tRNA(Asn) or phospho-Glu-tRNA(Gln). This Prochlorococcus marinus (strain MIT 9303) protein is Aspartyl/glutamyl-tRNA(Asn/Gln) amidotransferase subunit B.